The following is a 117-amino-acid chain: Hydrogenase maturation factor HypA (117 aa).

H2 is a binding site for Ni(2+). Residues C73, C76, C89, and C92 each contribute to the Zn(2+) site.

The protein belongs to the HypA/HybF family.

Its function is as follows. Involved in the maturation of [NiFe] hydrogenases. Required for nickel insertion into the metal center of the hydrogenase. The polypeptide is Hydrogenase maturation factor HypA (Shewanella baltica (strain OS185)).